Here is a 58-residue protein sequence, read N- to C-terminus: NADH dehydrogenase [ubiquinone] 1 beta subcomplex subunit 1 (58 aa).

A helical transmembrane segment spans residues 11–27; that stretch reads HWVHVLVPMGFVIGCYL.

Belongs to the complex I NDUFB1 subunit family. Complex I is composed of 45 different subunits.

The protein resides in the mitochondrion inner membrane. Its function is as follows. Accessory subunit of the mitochondrial membrane respiratory chain NADH dehydrogenase (Complex I) that is believed not to be involved in catalysis. Complex I functions in the transfer of electrons from NADH to the respiratory chain. The immediate electron acceptor for the enzyme is believed to be ubiquinone. The polypeptide is NADH dehydrogenase [ubiquinone] 1 beta subcomplex subunit 1 (NDUFB1) (Homo sapiens (Human)).